The chain runs to 556 residues: Membrane protein insertase YidC (556 aa).

5 helical membrane passes run 6–26 (IVLY…WQID), 332–352 (LDLT…FSLM), 358–378 (VVGN…LAFY), 428–448 (LGGC…YWVL), and 501–521 (VMMF…SGLV).

This sequence belongs to the OXA1/ALB3/YidC family. Type 1 subfamily. As to quaternary structure, interacts with the Sec translocase complex via SecD. Specifically interacts with transmembrane segments of nascent integral membrane proteins during membrane integration.

The protein localises to the cell inner membrane. In terms of biological role, required for the insertion and/or proper folding and/or complex formation of integral membrane proteins into the membrane. Involved in integration of membrane proteins that insert both dependently and independently of the Sec translocase complex, as well as at least some lipoproteins. Aids folding of multispanning membrane proteins. The polypeptide is Membrane protein insertase YidC (Legionella pneumophila (strain Paris)).